The sequence spans 411 residues: Copper resistance protein CRF1 (411 aa).

The copper-fist DNA-binding region spans 1 to 40 (MVVIEGIKYACERCIRGHRVSSCTHTQQPLIRIKPKGRPA). Residues C11, C14, C23, and H25 each contribute to the Zn(2+) site. Composition is skewed to low complexity over residues 115–190 (QQQA…PHSP), 205–214 (SSSSLSSLHS), 227–241 (SHNS…ANSP), and 350–370 (SVAA…PPSS). Disordered stretches follow at residues 115–241 (QQQA…ANSP) and 348–389 (EMSV…VSPA).

It is found in the nucleus. Transcriptional regulator involved in resistance to high copper concentration. The sequence is that of Copper resistance protein CRF1 (CRF1) from Yarrowia lipolytica (strain CLIB 122 / E 150) (Yeast).